The chain runs to 154 residues: Transcriptional repressor NrdR (154 aa).

Residues 1–22 (MECPNCHKNASRVIDSRPSDEN) form a disordered region. Residues 3-34 (CPNCHKNASRVIDSRPSDENRAIRRRRECENC) fold into a zinc finger. Residues 49 to 139 (LLVVKNDGTR…IYRQFKDVSG (91 aa)) form the ATP-cone domain.

This sequence belongs to the NrdR family. Requires Zn(2+) as cofactor.

Functionally, negatively regulates transcription of bacterial ribonucleotide reductase nrd genes and operons by binding to NrdR-boxes. The chain is Transcriptional repressor NrdR from Lactobacillus johnsonii (strain CNCM I-12250 / La1 / NCC 533).